The following is a 411-amino-acid chain: Probable G-protein coupled receptor AH9.1 (411 aa).

The Cytoplasmic segment spans residues 1 to 18; the sequence is MLLFLLRRIFDCRYKYKL. Residues 19–39 traverse the membrane as a helical segment; sequence FVKALVLFLTIVYNAGLVHFF. The Extracellular segment spans residues 40-55; that stretch reads FRTTSLDDSPEMNHVD. Residues 56–76 traverse the membrane as a helical segment; it reads YVAHVIVMPIVLSIGMINQCL. Residues 77–87 lie on the Cytoplasmic side of the membrane; that stretch reads NVCTLLHIRTS. A helical transmembrane segment spans residues 88 to 108; it reads IFLYLKASAIADILSIVAFIP. The Extracellular portion of the chain corresponds to 109–131; that stretch reads FLFRHAKLIDPSWELGMFYHAHL. The helical transmembrane segment at 132–152 threads the bilayer; sequence ELPLINALISASALNIVAMTV. Over 153-176 the chain is Cytoplasmic; sequence DRYVSVCHPIKFFQNNETKPSRRR. Residues 177–197 form a helical membrane-spanning segment; it reads TMLIIVMIYFIALMIYFPSVF. Topologically, residues 198–229 are extracellular; the sequence is QKKLGVVTDALTNKTIYTIVRNEDVEALQVFK. N210 carries N-linked (GlcNAc...) asparagine glycosylation. Residues 230–250 traverse the membrane as a helical segment; that stretch reads FYLIVRECICRWGPVLLLVIL. Topologically, residues 251 to 299 are cytoplasmic; the sequence is NMCVVRGLRKIDKRNWFWRQPSQNSRTETLAQRQLRSPRDDRSRISVLL. The helical transmembrane segment at 300–320 threads the bilayer; it reads FVTSATFIICNIPASVISFFV. The Extracellular segment spans residues 321 to 333; that stretch reads RRVSGSLFWQIFR. A helical transmembrane segment spans residues 334 to 354; sequence AIANLLQVTSYLYNFYLYALC. The Cytoplasmic portion of the chain corresponds to 355-411; that stretch reads SSEYRHAFLRLFGCRSSLSPTSTGDSPTVRVSVHGKRCHQAVVLLGNENHENPVDEV.

It belongs to the G-protein coupled receptor 1 family.

It is found in the cell membrane. Its function is as follows. Not known. Putative receptor. The chain is Probable G-protein coupled receptor AH9.1 from Caenorhabditis elegans.